A 134-amino-acid chain; its full sequence is MKIALIAHDRKKDNLVQFAIAYKEILLEHSLYATGTTGQRVIEATGLEVTRFRSGPLGGDQQIGAMIANNDMDMVIFFRDPLTAQPHEPDVSALIRLCDVYQVPLATNMGTAEILLKGLQEGFVDWRLIQERRN.

In terms of domain architecture, MGS-like spans 1 to 134; it reads MKIALIAHDR…DWRLIQERRN (134 aa). Substrate-binding positions include His-8, Lys-12, 34–37, and 54–55; these read TGTT and SG. The active-site Proton donor/acceptor is Asp-60. His-87 is a binding site for substrate.

The protein belongs to the methylglyoxal synthase family.

The enzyme catalyses dihydroxyacetone phosphate = methylglyoxal + phosphate. In terms of biological role, catalyzes the formation of methylglyoxal from dihydroxyacetone phosphate. This Lysinibacillus sphaericus (strain C3-41) protein is Methylglyoxal synthase.